The sequence spans 859 residues: DNA mismatch repair protein MutS (859 aa).

618 to 625 (GPNMGGKS) contributes to the ATP binding site.

The protein belongs to the DNA mismatch repair MutS family.

In terms of biological role, this protein is involved in the repair of mismatches in DNA. It is possible that it carries out the mismatch recognition step. This protein has a weak ATPase activity. The protein is DNA mismatch repair protein MutS of Shewanella sediminis (strain HAW-EB3).